Here is a 325-residue protein sequence, read N- to C-terminus: 1-aminocyclopropane-1-carboxylate oxidase 2 (325 aa).

One can recognise a Fe2OG dioxygenase domain in the interval 157–257 (PTFGTKVSNY…RMSIASFYNP (101 aa)). Residues histidine 181, aspartate 183, and histidine 238 each coordinate Fe cation.

It belongs to the iron/ascorbate-dependent oxidoreductase family. Fe cation serves as cofactor.

It carries out the reaction 1-aminocyclopropane-1-carboxylate + L-ascorbate + O2 = ethene + L-dehydroascorbate + hydrogen cyanide + CO2 + 2 H2O. Its pathway is alkene biosynthesis; ethylene biosynthesis via S-adenosyl-L-methionine; ethylene from S-adenosyl-L-methionine: step 2/2. The chain is 1-aminocyclopropane-1-carboxylate oxidase 2 (ACO2) from Doritaenopsis sp. (Moth orchid).